Here is an 87-residue protein sequence, read N- to C-terminus: U3-theraphotoxin-Hhn1a 18 (87 aa).

The N-terminal stretch at 1-24 is a signal peptide; that stretch reads MVNTKASMFLTFAGLVLLFVVCYA. A propeptide spanning residues 25-52 is cleaved from the precursor; that stretch reads SESEEKEFPKEMLSSIFAVDNDFKQEER. Disulfide bonds link cysteine 54-cysteine 67, cysteine 61-cysteine 72, and cysteine 66-cysteine 79.

This sequence belongs to the neurotoxin 10 (Hwtx-1) family. 51 (Hntx-8) subfamily. Hntx-8 sub-subfamily. Expressed by the venom gland.

The protein localises to the secreted. Functionally, ion channel inhibitor. This chain is U3-theraphotoxin-Hhn1a 18, found in Cyriopagopus hainanus (Chinese bird spider).